The primary structure comprises 442 residues: Casein kinase 1-like protein 10 (442 aa).

The Protein kinase domain maps to 9–278; the sequence is FKLGRKIGSG…LKRLFRDLFI (270 aa). Residues 15 to 23 and Lys38 each bind ATP; that span reads IGSGSFGEL. Asp128 serves as the catalytic Proton acceptor. Disordered stretches follow at residues 299-323 and 381-421; these read GSISKPRPNPKPALDPPGPSAERNE and AVMS…LSAR. The segment covering 305–317 has biased composition (pro residues); that stretch reads RPNPKPALDPPGP. The span at 384–394 shows a compositional bias: low complexity; it reads SSSQPGSSGEL. Over residues 400-417 the composition is skewed to polar residues; it reads SKLFSSSAQKIQPVQETK.

Belongs to the protein kinase superfamily. CK1 Ser/Thr protein kinase family. Casein kinase I subfamily. Monomer. Post-translationally, autophosphorylated.

Its subcellular location is the cytoplasm. It is found in the cell junction. The protein resides in the plasmodesma. The enzyme catalyses L-seryl-[protein] + ATP = O-phospho-L-seryl-[protein] + ADP + H(+). It carries out the reaction L-threonyl-[protein] + ATP = O-phospho-L-threonyl-[protein] + ADP + H(+). Functionally, casein kinases are operationally defined by their preferential utilization of acidic proteins such as caseins as substrates. It can phosphorylate a large number of proteins. The protein is Casein kinase 1-like protein 10 of Arabidopsis thaliana (Mouse-ear cress).